An 85-amino-acid chain; its full sequence is Probable oxaloacetate decarboxylase gamma chain (85 aa).

The helical transmembrane segment at 15-35 (ISGMGFVLLFLIVLIYAISFI) threads the bilayer.

Belongs to the OadG family. In terms of assembly, heterotrimer of an alpha, a beta and a gamma subunit. It depends on Na(+) as a cofactor.

Its subcellular location is the cell membrane. It carries out the reaction oxaloacetate + 2 Na(+)(in) + H(+) = pyruvate + 2 Na(+)(out) + CO2. Catalyzes the decarboxylation of oxaloacetate coupled to Na(+) translocation. This Actinobacillus pleuropneumoniae serotype 5b (strain L20) protein is Probable oxaloacetate decarboxylase gamma chain.